We begin with the raw amino-acid sequence, 135 residues long: Hemoglobin subunit beta-3 (135 aa).

One can recognise a Globin domain in the interval 2–135; that stretch reads HWTAEEKALV…VVDALSKAYQ (134 aa). Positions 57 and 81 each coordinate heme b.

The protein belongs to the globin family. Hb 3 is a heterotetramer of two alpha and two beta-3 chains. Red blood cells (at protein level).

In terms of biological role, involved in oxygen transport from gills to the various peripheral tissues. The chain is Hemoglobin subunit beta-3 from Somniosus microcephalus (Greenland sleeper shark).